The chain runs to 222 residues: Putative RING finger protein ORF118 (222 aa).

Residues 78–114 (CCICMAKNNRKEALPCQHNVCRDCYYKPMRNNCPVCN) form an RING-type zinc finger. Residues 184–222 (IENRIHNNNNNNYDENNPDDLPVIHPPRRRHRQTAHISI) are disordered. Low complexity predominate over residues 189 to 198 (HNNNNNNYDE). Residues 209–222 (PPRRRHRQTAHISI) are compositionally biased toward basic residues.

This is Putative RING finger protein ORF118 from Magallana gigas (Pacific oyster).